Here is a 477-residue protein sequence, read N- to C-terminus: Bifunctional protein HldE (477 aa).

The segment at 1 to 320 (MKDSLPAFEK…SLSDTHHSET (320 aa)) is ribokinase. 195-198 (NLHE) serves as a coordination point for ATP. Asp-264 is an active-site residue. The cytidylyltransferase stretch occupies residues 346 to 477 (MTNGCFDILH…KIIENIMANQ (132 aa)).

This sequence in the N-terminal section; belongs to the carbohydrate kinase PfkB family. It in the C-terminal section; belongs to the cytidylyltransferase family. Homodimer.

It catalyses the reaction D-glycero-beta-D-manno-heptose 7-phosphate + ATP = D-glycero-beta-D-manno-heptose 1,7-bisphosphate + ADP + H(+). The catalysed reaction is D-glycero-beta-D-manno-heptose 1-phosphate + ATP + H(+) = ADP-D-glycero-beta-D-manno-heptose + diphosphate. Its pathway is nucleotide-sugar biosynthesis; ADP-L-glycero-beta-D-manno-heptose biosynthesis; ADP-L-glycero-beta-D-manno-heptose from D-glycero-beta-D-manno-heptose 7-phosphate: step 1/4. It participates in nucleotide-sugar biosynthesis; ADP-L-glycero-beta-D-manno-heptose biosynthesis; ADP-L-glycero-beta-D-manno-heptose from D-glycero-beta-D-manno-heptose 7-phosphate: step 3/4. Catalyzes the phosphorylation of D-glycero-D-manno-heptose 7-phosphate at the C-1 position to selectively form D-glycero-beta-D-manno-heptose-1,7-bisphosphate. Functionally, catalyzes the ADP transfer from ATP to D-glycero-beta-D-manno-heptose 1-phosphate, yielding ADP-D-glycero-beta-D-manno-heptose. In Shewanella piezotolerans (strain WP3 / JCM 13877), this protein is Bifunctional protein HldE.